We begin with the raw amino-acid sequence, 1011 residues long: Ankyrin repeat domain-containing protein 18B (1011 aa).

ANK repeat units follow at residues 67 to 96 (KDRTVLHLACAHGRVQVVTLLLDRKCQINI), 100 to 129 (LNRTPLMKAVHCQEEACAIILLKRGANPNI), 133 to 162 (YGNTALHYAVYNEGTSLAERLLSHHANIEA), 166 to 195 (EGNTPLLFAINSRRQHMVEFLLKNQANIHA), and 199 to 228 (FKRTALILAVQHNLSSIVTLLLQQNIHISS). 2 disordered regions span residues 264–330 (LRND…GKKK) and 533–554 (MHPNGEAKESQSIGKQNSSEER). Coiled coils occupy residues 277 to 319 (ENLK…ENKQ), 385 to 639 (NEEM…ELVD), 692 to 722 (ISLLNYTADQIRKKNRELEEEATGYKKCLEM), and 752 to 908 (FKKL…EAFA). Positions 280–293 (KKRKKRKKLKKRKE) are enriched in basic residues. Residues 294-319 (GAKAEHNLKVASEEKQERLERSENKQ) show a composition bias toward basic and acidic residues.

The protein is Ankyrin repeat domain-containing protein 18B (ANKRD18B) of Homo sapiens (Human).